The primary structure comprises 569 residues: Pyrophosphate--fructose 6-phosphate 1-phosphotransferase subunit beta 2 (569 aa).

Residue G107 participates in diphosphate binding. A Mg(2+)-binding site is contributed by D201. Substrate is bound by residues 229 to 231 (TID), 268 to 269 (KY), 276 to 278 (MGR), E337, and 442 to 445 (YEGR). D231 serves as the catalytic Proton acceptor.

It belongs to the phosphofructokinase type A (PFKA) family. PPi-dependent PFK group II subfamily. Clade 'Long' sub-subfamily. Tetramer of two alpha (regulatory) and two beta (catalytic) chains. Mg(2+) is required as a cofactor.

The protein resides in the cytoplasm. It catalyses the reaction beta-D-fructose 6-phosphate + diphosphate = beta-D-fructose 1,6-bisphosphate + phosphate + H(+). The protein operates within carbohydrate degradation; glycolysis; D-glyceraldehyde 3-phosphate and glycerone phosphate from D-glucose: step 3/4. With respect to regulation, allosterically activated by fructose 2,6-bisphosphate. Functionally, catalytic subunit of pyrophosphate--fructose 6-phosphate 1-phosphotransferase. Catalyzes the phosphorylation of D-fructose 6-phosphate, the first committing step of glycolysis. Uses inorganic phosphate (PPi) as phosphoryl donor instead of ATP like common ATP-dependent phosphofructokinases (ATP-PFKs), which renders the reaction reversible, and can thus function both in glycolysis and gluconeogenesis. This Arabidopsis thaliana (Mouse-ear cress) protein is Pyrophosphate--fructose 6-phosphate 1-phosphotransferase subunit beta 2.